The following is a 29-amino-acid chain: Dermaseptin-J9 (29 aa).

As to expression, expressed by the skin glands.

Its subcellular location is the secreted. Functionally, has antimicrobial activity. In Phasmahyla jandaia (Jandaia leaf frog), this protein is Dermaseptin-J9.